Here is a 179-residue protein sequence, read N- to C-terminus: Large ribosomal subunit protein bL25 (179 aa).

The protein belongs to the bacterial ribosomal protein bL25 family. CTC subfamily. Part of the 50S ribosomal subunit; part of the 5S rRNA/L5/L18/L25 subcomplex. Contacts the 5S rRNA. Binds to the 5S rRNA independently of L5 and L18.

In terms of biological role, this is one of the proteins that binds to the 5S RNA in the ribosome where it forms part of the central protuberance. This is Large ribosomal subunit protein bL25 from Desulfitobacterium hafniense (strain DSM 10664 / DCB-2).